The sequence spans 162 residues: Protein NrdI (162 aa).

It belongs to the NrdI family.

Probably involved in ribonucleotide reductase function. The sequence is that of Protein NrdI from Streptococcus pyogenes serotype M28 (strain MGAS6180).